Consider the following 290-residue polypeptide: Phycobilisome 32.3 kDa linker polypeptide, phycocyanin-associated, rod (290 aa).

Residues 1 to 179 (MPVTVAASRL…LQRGYANSDR (179 aa)) enclose the PBS-linker domain. The CpcD-like domain maps to 236–288 (DQVVRVEVAALSTPRYPRIRRSSRVFFVPVSRLSQKLQEIQRMGGRVASISPA).

Belongs to the phycobilisome linker protein family.

The protein resides in the cellular thylakoid membrane. Rod linker protein, associated with phycocyanin. Linker polypeptides determine the state of aggregation and the location of the disk-shaped phycobiliprotein units within the phycobilisome and modulate their spectroscopic properties in order to mediate a directed and optimal energy transfer. The chain is Phycobilisome 32.3 kDa linker polypeptide, phycocyanin-associated, rod (cpcC) from Picosynechococcus sp. (strain ATCC 27264 / PCC 7002 / PR-6) (Agmenellum quadruplicatum).